The sequence spans 163 residues: Protein-export protein SecB (163 aa).

It belongs to the SecB family. Homotetramer, a dimer of dimers. One homotetramer interacts with 1 SecA dimer.

It is found in the cytoplasm. In terms of biological role, one of the proteins required for the normal export of preproteins out of the cell cytoplasm. It is a molecular chaperone that binds to a subset of precursor proteins, maintaining them in a translocation-competent state. It also specifically binds to its receptor SecA. The chain is Protein-export protein SecB from Brucella anthropi (strain ATCC 49188 / DSM 6882 / CCUG 24695 / JCM 21032 / LMG 3331 / NBRC 15819 / NCTC 12168 / Alc 37) (Ochrobactrum anthropi).